Here is a 409-residue protein sequence, read N- to C-terminus: Probable ferredoxin reductase CtmF (409 aa).

Positions 15, 37, 50, 83, 279, and 298 each coordinate FAD.

Belongs to the FAD-dependent oxidoreductase family. FAD serves as cofactor.

Its pathway is terpene metabolism; monoterpene degradation. Involved in the degradation of the cyclic monoterpene limonene. Probably part of an electron transfer system involved in the oxidation of limonene to perillyl alcohol. The chain is Probable ferredoxin reductase CtmF from Castellaniella defragrans (strain DSM 12143 / CCUG 39792 / 65Phen) (Alcaligenes defragrans).